The chain runs to 416 residues: Proline-serine-threonine phosphatase-interacting protein 1 (416 aa).

In terms of domain architecture, F-BAR spans 5-264 (LQFKDAFWCR…TLEGCSIDAD (260 aa)). A coiled-coil region spans residues 166-212 (HQKQVEKSQNKARQCKDSATEAERVYRQSIAQLEKVRAEWEQEHRTT). Ser318 is modified (phosphoserine). Tyr345 bears the Phosphotyrosine mark. In terms of domain architecture, SH3 spans 359–416 (SPAQEYRALYDYTAQNPDELDLSAGDILEVILEGEDGWWTVERNGQRGFVPGSYLEKL).

As to quaternary structure, homodimer. Homotrimer. Interacts (via coiled-coil domain) with CD2AP, PTPN12 and PTPN18. Interacts (via SH3 domain) with ABL1 and WAS. Interacts (via SH3 and coiled-coil domains) with MEFV (via B-box zinc finger); the interaction allows binding of MEFV to PYCARD and facilitates formation of PYCARD pyroptosomes. Interacts with CD2, DNM2 and FASLG. Post-translationally, dephosphorylated on Tyr-345 by PTPN18, this event negatively regulates the association of PSTPIP1 with SH2 domain-containing proteins as tyrosine kinase. Phosphorylation of Tyr-345 is probably required for subsequent phosphorylation at other tyrosine residues. Phosphorylation is induced by activation of the EGFR and PDGFR in a ABL1 dependent manner. The phosphorylation regulates the interaction with WAS and with MEFV. In terms of tissue distribution, highly expressed in the peripheral blood leukocytes, granulocytes and monocytes, namely in T-cells and natural killer cells, and in spleen. Weakly expressed in the thymus, small intestine, lung and placenta.

It is found in the cytoplasm. Its subcellular location is the cell membrane. It localises to the cell projection. The protein localises to the uropodium. The protein resides in the cytoskeleton. It is found in the perinuclear region. Its subcellular location is the lamellipodium. It localises to the cleavage furrow. Functionally, involved in regulation of the actin cytoskeleton. May regulate WAS actin-bundling activity. Bridges the interaction between ABL1 and PTPN18 leading to ABL1 dephosphorylation. May play a role as a scaffold protein between PTPN12 and WAS and allow PTPN12 to dephosphorylate WAS. Has the potential to physically couple CD2 and CD2AP to WAS. Acts downstream of CD2 and CD2AP to recruit WAS to the T-cell:APC contact site so as to promote the actin polymerization required for synapse induction during T-cell activation. Down-regulates CD2-stimulated adhesion through the coupling of PTPN12 to CD2. Also has a role in innate immunity and the inflammatory response. Recruited to inflammasomes by MEFV. Induces formation of pyroptosomes, large supramolecular structures composed of oligomerized PYCARD dimers which form prior to inflammatory apoptosis. Binding to MEFV allows MEFV to bind to PYCARD and facilitates pyroptosome formation. Regulates endocytosis and cell migration in neutrophils. This Homo sapiens (Human) protein is Proline-serine-threonine phosphatase-interacting protein 1 (PSTPIP1).